The chain runs to 105 residues: Vacuolar ATPase assembly integral membrane protein VMA21 homolog (105 aa).

The tract at residues M1–S26 is disordered. Residues M1–L36 are Cytoplasmic-facing. The chain crosses the membrane as a helical span at residues F37–V57. The Lumenal portion of the chain corresponds to L58–K68. The helical transmembrane segment at V69–I89 threads the bilayer. The Cytoplasmic segment spans residues Y90–D105.

Belongs to the VMA21 family.

The protein resides in the endoplasmic reticulum membrane. It is found in the endoplasmic reticulum-Golgi intermediate compartment membrane. Its subcellular location is the cytoplasmic vesicle. It localises to the COPII-coated vesicle membrane. Functionally, required for the assembly of the V0 complex of the vacuolar ATPase (V-ATPase) in the endoplasmic reticulum. The sequence is that of Vacuolar ATPase assembly integral membrane protein VMA21 homolog from Drosophila erecta (Fruit fly).